Consider the following 172-residue polypeptide: CD-NTase-associated protein 7 (172 aa).

The required for binding to CdnC and to confer phage immunity stretch occupies residues 141-172; that stretch reads AQSPGINGYLENDKTYSAGGRSLTRTSVRNFV.

It belongs to the bacterial HORMA family. HORMA1 subfamily. As to quaternary structure, forms complexes with CdnC with 1:1 and 2:2 stoichimetry, and a 1:1:6 CdnC:Cap7:Cap6 complex.

In terms of biological role, sensor protein of a CBASS antivirus system. CBASS (cyclic oligonucleotide-based antiphage signaling system) provides immunity against bacteriophage. The CD-NTase protein synthesizes cyclic nucleotides in response to infection; these serve as specific second messenger signals. The signals activate a diverse range of effectors, leading to bacterial cell death and thus abortive phage infection. A type III-C(AAA) CBASS system. Binds to a closure peptide (consensus His-Xaa-Xaa-Ile-Leu-Leu-Thr), which allows it to activate CdnC for second messenger synthesis. Its function is as follows. Protects E.coli strain JP313 against bacteriophage lambda cI- infection. When the cdnC-cap7-cap6-nucC operon is transformed into a susceptible strain it confers bacteriophage immunity. Mutations in the sensor (Cap7 also called HORMA) or effector proteins (CdnC, NucC) but not the disassembly protein (Cap6 also called Trip13) no longer confer immunity. The presence of the intact operon leads to culture collapse and cell death, which occurs before the phage has finished its replication cycle, thus protecting non-infected bacteria by aborting the phage infection and preventing its propagation. This Escherichia coli (strain MS 115-1) protein is CD-NTase-associated protein 7.